Reading from the N-terminus, the 95-residue chain is MSLSNEQVGRIARLARLAISEGEIDAVRAKLDGIFGLIEQMQAVDTAGVEPMSHPQELATRLRDDVVTETDRRSAFQSVAPQTEAGLYLVPKVIE.

It belongs to the GatC family. As to quaternary structure, heterotrimer of A, B and C subunits.

It carries out the reaction L-glutamyl-tRNA(Gln) + L-glutamine + ATP + H2O = L-glutaminyl-tRNA(Gln) + L-glutamate + ADP + phosphate + H(+). It catalyses the reaction L-aspartyl-tRNA(Asn) + L-glutamine + ATP + H2O = L-asparaginyl-tRNA(Asn) + L-glutamate + ADP + phosphate + 2 H(+). Functionally, allows the formation of correctly charged Asn-tRNA(Asn) or Gln-tRNA(Gln) through the transamidation of misacylated Asp-tRNA(Asn) or Glu-tRNA(Gln) in organisms which lack either or both of asparaginyl-tRNA or glutaminyl-tRNA synthetases. The reaction takes place in the presence of glutamine and ATP through an activated phospho-Asp-tRNA(Asn) or phospho-Glu-tRNA(Gln). The chain is Aspartyl/glutamyl-tRNA(Asn/Gln) amidotransferase subunit C from Azoarcus sp. (strain BH72).